The sequence spans 125 residues: Large ribosomal subunit protein bL12 (125 aa).

This sequence belongs to the bacterial ribosomal protein bL12 family. In terms of assembly, homodimer. Part of the ribosomal stalk of the 50S ribosomal subunit. Forms a multimeric L10(L12)X complex, where L10 forms an elongated spine to which 2 to 4 L12 dimers bind in a sequential fashion. Binds GTP-bound translation factors.

In terms of biological role, forms part of the ribosomal stalk which helps the ribosome interact with GTP-bound translation factors. Is thus essential for accurate translation. This is Large ribosomal subunit protein bL12 from Cereibacter sphaeroides (strain ATCC 17023 / DSM 158 / JCM 6121 / CCUG 31486 / LMG 2827 / NBRC 12203 / NCIMB 8253 / ATH 2.4.1.) (Rhodobacter sphaeroides).